We begin with the raw amino-acid sequence, 337 residues long: Cytoskeleton protein RodZ (337 aa).

The Cytoplasmic segment spans residues 1–111 (MNTEATHDQN…LGKRRKKRDG (111 aa)). Positions 19–71 (LRNAREQLGLSQQAVAERLCLKVSTVRDIEEDKAPADLASTFLRGYIRSYARL) constitute an HTH cro/C1-type domain. Residues 30–49 (QQAVAERLCLKVSTVRDIEE) constitute a DNA-binding region (H-T-H motif). The chain crosses the membrane as a helical; Signal-anchor for type II membrane protein span at residues 112–132 (WLMTFTWLVLFVVIGLSGAWW). The Periplasmic segment spans residues 133–337 (WQDRKAQQEE…TLNAEQSPAQ (205 aa)). The span at 144–167 (TTMADQSSAELSSNSEQGQSVPLN) shows a compositional bias: polar residues. The interval 144–235 (TTMADQSSAE…PTAATTPDGA (92 aa)) is disordered. The span at 168–207 (TSTTTDPATTSTPPASVDTTATNTQTPAVTAPAPAVDPQQ) shows a compositional bias: low complexity. Residues 208-218 (NAVVSPSQANV) are compositionally biased toward polar residues. The segment covering 219 to 235 (DTAATPAPTAATTPDGA) has biased composition (low complexity).

This sequence belongs to the RodZ family.

Its subcellular location is the cell inner membrane. Functionally, cytoskeletal protein that is involved in cell-shape control through regulation of the length of the long axis. This chain is Cytoskeleton protein RodZ, found in Escherichia coli (strain K12 / MC4100 / BW2952).